Here is a 926-residue protein sequence, read N- to C-terminus: Up-regulator of cell proliferation (926 aa).

Ser-3 bears the Phosphoserine mark. The VLIG-type G domain maps to 689–924; that stretch reads RSRLVVLSAL…NIQQLIELLR (236 aa).

Belongs to the TRAFAC class dynamin-like GTPase superfamily. Very large inducible GTPase (VLIG) family.

It is found in the cytoplasm. Its subcellular location is the nucleus. Functionally, may be involved in cell cycle progression through the regulation of cyclin D1 expression. In Mus musculus (Mouse), this protein is Up-regulator of cell proliferation (Urgcp).